A 308-amino-acid chain; its full sequence is tRNA dimethylallyltransferase 2 (308 aa).

Residue 13 to 20 (GPTASGKT) coordinates ATP. Substrate is bound at residue 15 to 20 (TASGKT). An interaction with substrate tRNA region spans residues 38 to 41 (DSRQ).

It belongs to the IPP transferase family. As to quaternary structure, monomer. Mg(2+) is required as a cofactor.

The enzyme catalyses adenosine(37) in tRNA + dimethylallyl diphosphate = N(6)-dimethylallyladenosine(37) in tRNA + diphosphate. Catalyzes the transfer of a dimethylallyl group onto the adenine at position 37 in tRNAs that read codons beginning with uridine, leading to the formation of N6-(dimethylallyl)adenosine (i(6)A). The protein is tRNA dimethylallyltransferase 2 of Bacteroides fragilis (strain YCH46).